Here is a 257-residue protein sequence, read N- to C-terminus: OCIA domain-containing protein 1 (257 aa).

2 disordered regions span residues 1–20 (MDSPLNDGSHHPPPHAPHPL) and 148–257 (YSDE…SWTD). Positions 1 to 110 (MDSPLNDGSH…MRLPNSHLGE (110 aa)) constitute an OCIA domain. Residues 156–170 (GRSTSLNLDTESRPT) show a composition bias toward polar residues. Residues 204 to 216 (EDLRRRNREEYSK) show a composition bias toward basic and acidic residues.

This sequence belongs to the OCIAD1 family. Interacts with STAT3 and ARF1. Expressed in all cells of the primary lymph gland lobe.

It localises to the endosome. Functionally, maintains stem cell potency. Involved in endocytic pathways that mediate signaling during hematopoiesis. In Drosophila melanogaster (Fruit fly), this protein is OCIA domain-containing protein 1 (asrij).